The following is a 369-amino-acid chain: 2-aminoethylphosphonate--pyruvate transaminase (369 aa).

The residue at position 193 (Lys193) is an N6-(pyridoxal phosphate)lysine.

Belongs to the class-V pyridoxal-phosphate-dependent aminotransferase family. PhnW subfamily. Homodimer. Pyridoxal 5'-phosphate serves as cofactor.

The catalysed reaction is (2-aminoethyl)phosphonate + pyruvate = phosphonoacetaldehyde + L-alanine. Involved in phosphonate degradation. The protein is 2-aminoethylphosphonate--pyruvate transaminase of Burkholderia pseudomallei (strain K96243).